We begin with the raw amino-acid sequence, 598 residues long: Peroxisomal multifunctional enzyme type 2 (598 aa).

Positions 1–309 (MSSSDGKLRY…LEVLEKLKEG (309 aa)) are (3R)-hydroxyacyl-CoA dehydrogenase. NAD(+) contacts are provided by residues 16 to 40 (VVTG…AKVV), Leu-24, Asp-43, 78 to 79 (SV), and Asn-102. Ser-154 is a binding site for substrate. Catalysis depends on Tyr-167, which acts as the Proton acceptor. NAD(+) contacts are provided by residues 167-171 (YTAAK) and 199-202 (AASR). Positions 310 to 598 (GGDAIEDAFE…VDLKSSQAKL (289 aa)) are enoyl-CoA hydratase 2. (3R)-3-hydroxydecanoyl-CoA is bound by residues 390–391 (HG), Lys-419, 496–501 (DKNPLH), Gly-519, and Phe-549. The MaoC-like domain occupies 469–586 (PAPNRQPDAT…VETGKEVISG (118 aa)). A Microbody targeting signal motif is present at residues 596–598 (AKL).

This sequence belongs to the short-chain dehydrogenases/reductases (SDR) family. In terms of assembly, homodimer.

It localises to the peroxisome. The enzyme catalyses a (3R)-3-hydroxyacyl-CoA + NAD(+) = a 3-oxoacyl-CoA + NADH + H(+). It carries out the reaction a (3R)-3-hydroxyacyl-CoA = a (2E)-enoyl-CoA + H2O. It functions in the pathway lipid metabolism; fatty acid beta-oxidation. In terms of biological role, bifunctional enzyme acting on the peroxisomal beta-oxidation pathway for fatty acids. The polypeptide is Peroxisomal multifunctional enzyme type 2 (Drosophila melanogaster (Fruit fly)).